The chain runs to 373 residues: Alpha-N-acetylgalactosaminide alpha-2,6-sialyltransferase 2 (373 aa).

Residues 1-6 (MDLPRR) lie on the Cytoplasmic side of the membrane. The chain crosses the membrane as a helical; Signal-anchor for type II membrane protein span at residues 7-27 (WLFRMLLLVATSSGILLMLYS). Residues 28–373 (SAGQQSPETQ…NAGILWLYQR (346 aa)) lie on the Lumenal side of the membrane. Cystine bridges form between Cys65/Cys147 and Cys150/Cys316. A glycan (N-linked (GlcNAc...) asparagine) is linked at Asn103. Residue Asn155 coordinates CMP-N-acetyl-beta-neuraminate. Asn160 carries an N-linked (GlcNAc...) asparagine glycan. CMP-N-acetyl-beta-neuraminate-binding residues include Asn178, Ser303, and His335.

Belongs to the glycosyltransferase 29 family. As to expression, highly expressed in lactating mammary gland and adult testis. Lower levels in kidney.

It localises to the golgi apparatus membrane. The catalysed reaction is a beta-D-galactosyl-(1-&gt;3)-N-acetyl-alpha-D-galactosaminyl derivative + CMP-N-acetyl-beta-neuraminate = a beta-D-galactosyl-(1-&gt;3)-[N-acetyl-alpha-neuraminyl-(2-&gt;6)]-N-acetyl-alpha-D-galactosaminyl derivative + CMP + H(+). The enzyme catalyses a 3-O-[N-acetyl-alpha-D-galactosaminyl]-L-threonyl-[protein] + CMP-N-acetyl-beta-neuraminate = a 3-O-[N-acetyl-alpha-neuraminosyl-(2-&gt;6)-N-acetyl-alpha-D-galactosaminyl]-L-threonyl-[protein] + CMP + H(+). It catalyses the reaction a 3-O-[N-acetyl-alpha-neuraminyl-(2-&gt;3)-beta-D-galactosyl-(1-&gt;3)-N-acetyl-alpha-D-galactosaminyl]-L-threonyl-[protein] + CMP-N-acetyl-beta-neuraminate = a 3-O-{alpha-Neu5Ac-(2-&gt;3)-beta-D-Gal-(1-&gt;3)-[alpha-Neu5Ac-(2-&gt;6)]-alpha-D-GalNAc}-L-threonyl-[protein] + CMP + H(+). It functions in the pathway protein modification; protein glycosylation. Functionally, catalyzes the transfer of N-acetylneuraminyl groups onto glycan chains in glycoproteins. Conjugates sialic acid with an alpha-2-6 linkage to N-acetylgalactosamine (GalNAc) glycan chains linked to serine or threonine in glycoproteins. Sialylates alphaGalNAc- and Galbeta1-&gt;3GalNAc-O-Ser/Thr epitopes also known as Tn and T antigens. The chain is Alpha-N-acetylgalactosaminide alpha-2,6-sialyltransferase 2 (St6galnac2) from Mus musculus (Mouse).